A 127-amino-acid chain; its full sequence is Large ribosomal subunit protein bL17 (127 aa).

This sequence belongs to the bacterial ribosomal protein bL17 family. Part of the 50S ribosomal subunit. Contacts protein L32.

In Xanthomonas oryzae pv. oryzae (strain KACC10331 / KXO85), this protein is Large ribosomal subunit protein bL17.